A 375-amino-acid polypeptide reads, in one-letter code: MSYYLVQSTDEDILKHAECGGAVTAFFKYLLDKKLVDGVLALKKGEDVYDGLPYLVNDSKELVETCGSLHCAPTMFGNMISKHLKDMNLAVSVKPCDAMAIVELEKRHQIDKDKLYTIGLNCGGTVPPQTAKKMIELFYDVDPEDVIKEEIDKGKFIIELKDGSEKSVKIDELEEEGYGRRTNCQRCELKVPRNSDLACGNWGTEKGWTFVEVGSEKGEELLKNAQKEGYINVKAPSEKALEIRGKIEKSMINLGKKFQKEQLDEKYPEPEKWDEYWSRCIKCYGCRDVCPICFCKECALGEDYLDKGTIPPDPIMFQGIRLSHMSFSCINCGQCEDVCPVEIPLAKIYHRAQLKIRETTGFVPGIDDSMPFLYK.

4Fe-4S ferredoxin-type domains are found at residues 268-291 (PEPEKWDEYWSRCIKCYGCRDVCP) and 320-349 (IRLSHMSFSCINCGQCEDVCPVEIPLAKIY). The [4Fe-4S] cluster site is built by Cys-280, Cys-283, Cys-286, Cys-290, Cys-329, Cys-332, Cys-335, and Cys-339.

Belongs to the FrhB family. Dimer of an alpha (FdhA2) and a beta (FdhB2) subunit. The cofactor is [4Fe-4S] cluster. FAD serves as cofactor. Zn(2+) is required as a cofactor.

The catalysed reaction is oxidized coenzyme F420-(gamma-L-Glu)(n) + formate + 2 H(+) = reduced coenzyme F420-(gamma-L-Glu)(n) + CO2. Functionally, catalyzes the oxidation of formate to carbon dioxide, with coenzyme F420 as the electron acceptor. In vitro can also use methyl viologen as electron acceptor. This chain is F420-dependent formate dehydrogenase 2 subunit beta, found in Methanococcus maripaludis (strain DSM 14266 / JCM 13030 / NBRC 101832 / S2 / LL).